We begin with the raw amino-acid sequence, 146 residues long: Hemoglobin subunit beta (146 aa).

The Globin domain occupies 2–146 (HWTETERATI…VVAALSREYH (145 aa)). Histidine 63 and histidine 92 together coordinate heme b.

It belongs to the globin family. In terms of assembly, heterotetramer of two alpha chains and two beta chains (an easy dimerization is also reported). As to expression, red blood cells.

In terms of biological role, involved in oxygen transport from the lung to the various peripheral tissues. This chain is Hemoglobin subunit beta (HBB), found in Latimeria chalumnae (Coelacanth).